Consider the following 1005-residue polypeptide: Vacuolar membrane protease (1005 aa).

Topologically, residues 1–14 are cytoplasmic; it reads MAKETTARSILGYQ. The helical transmembrane segment at 15-35 threads the bilayer; that stretch reads TLPTTALIALIYVVAFFSVLV. The Vacuolar portion of the chain corresponds to 36–353; that stretch reads SDQLPSIPHP…PEDSAKQKSK (318 aa). N-linked (GlcNAc...) asparagine glycosylation occurs at N107. 2 residues coordinate Zn(2+): H152 and D164. The active-site Proton acceptor is the E196. E197 contributes to the Zn(2+) binding site. N-linked (GlcNAc...) asparagine glycosylation is present at N213. 2 residues coordinate Zn(2+): E222 and H311. Residues 354–374 traverse the membrane as a helical segment; that stretch reads PGVYFDRPVVLALLWAIGAVL. Over 375 to 448 the chain is Cytoplasmic; the sequence is KHNAGSPPPP…LITVWKQASF (74 aa). The disordered stretch occupies residues 379–420; it reads GSPPPPPKPTVPHSANNASAGTGRPGASTRQPTRSFGSNEDA. A compositionally biased stretch (polar residues) spans 406 to 419; it reads STRQPTRSFGSNED. A helical membrane pass occupies residues 449–469; the sequence is WIALIVTVGLQALLAWGYVAI. The Vacuolar segment spans residues 470-479; it reads NPFTIYSRPY. A helical transmembrane segment spans residues 480 to 500; it reads FVLLSFFALSFFSMTLVLQAA. At 501–519 the chain is on the cytoplasmic side; sequence FPSSPVKHAIEVREQEKTT. A helical membrane pass occupies residues 520–540; the sequence is ILLHLHLLSWIALLLSTILIG. Over 541-543 the chain is Vacuolar; it reads KSQ. The chain crosses the membrane as a helical span at residues 544-564; it reads VGSFYVVTVWYLGIWAATVIG. The Cytoplasmic segment spans residues 565 to 644; that stretch reads TLQPILVSKR…RKTNSKSKED (80 aa). The disordered stretch occupies residues 577-640; sequence DKGKRRARRS…ASNRRKTNSK (64 aa). Low complexity predominate over residues 588–606; sequence SASTSSSSSSSSSSSSGSD. Residues 645–665 traverse the membrane as a helical segment; the sequence is GAIGWWIAQVLLTVPPVVMLV. At 666–686 the chain is on the vacuolar side; the sequence is GQITSIVLEAMNQTLTDGNSA. The N-linked (GlcNAc...) asparagine glycan is linked to N677. The helical transmembrane segment at 687 to 707 threads the bilayer; sequence WSIYLLTALLATMLVLPVAPF. Topologically, residues 708 to 713 are cytoplasmic; sequence SPKLHR. The chain crosses the membrane as a helical span at residues 714-734; the sequence is GLIFLSAAVFVGFTIYLWVVF. Topologically, residues 735–1005 are vacuolar; it reads PFTRQDPFKV…VEASAPFTVV (271 aa). N761 and N961 each carry an N-linked (GlcNAc...) asparagine glycan.

This sequence belongs to the peptidase M28 family. It depends on Zn(2+) as a cofactor.

The protein localises to the vacuole membrane. In terms of biological role, may be involved in vacuolar sorting and osmoregulation. In Coprinopsis cinerea (strain Okayama-7 / 130 / ATCC MYA-4618 / FGSC 9003) (Inky cap fungus), this protein is Vacuolar membrane protease.